Here is a 413-residue protein sequence, read N- to C-terminus: Serine hydroxymethyltransferase (413 aa).

(6S)-5,6,7,8-tetrahydrofolate contacts are provided by residues Leu-117 and 121–123; that span reads GHL. N6-(pyridoxal phosphate)lysine is present on Lys-226. A (6S)-5,6,7,8-tetrahydrofolate-binding site is contributed by 349-351; sequence SPF.

The protein belongs to the SHMT family. As to quaternary structure, homodimer. It depends on pyridoxal 5'-phosphate as a cofactor.

It localises to the cytoplasm. It carries out the reaction (6R)-5,10-methylene-5,6,7,8-tetrahydrofolate + glycine + H2O = (6S)-5,6,7,8-tetrahydrofolate + L-serine. It functions in the pathway one-carbon metabolism; tetrahydrofolate interconversion. It participates in amino-acid biosynthesis; glycine biosynthesis; glycine from L-serine: step 1/1. In terms of biological role, catalyzes the reversible interconversion of serine and glycine with tetrahydrofolate (THF) serving as the one-carbon carrier. This reaction serves as the major source of one-carbon groups required for the biosynthesis of purines, thymidylate, methionine, and other important biomolecules. Also exhibits THF-independent aldolase activity toward beta-hydroxyamino acids, producing glycine and aldehydes, via a retro-aldol mechanism. The chain is Serine hydroxymethyltransferase from Listeria monocytogenes serotype 4b (strain F2365).